Here is a 184-residue protein sequence, read N- to C-terminus: dCTP deaminase (184 aa).

DCTP-binding positions include 107–112, 131–133, Q152, Y166, and Q176; these read KSTYAR and TLE. The active-site Proton donor/acceptor is the E133.

This sequence belongs to the dCTP deaminase family. In terms of assembly, homotrimer.

It catalyses the reaction dCTP + H2O + H(+) = dUTP + NH4(+). The protein operates within pyrimidine metabolism; dUMP biosynthesis; dUMP from dCTP (dUTP route): step 1/2. Functionally, catalyzes the deamination of dCTP to dUTP. The sequence is that of dCTP deaminase from Paramagnetospirillum magneticum (strain ATCC 700264 / AMB-1) (Magnetospirillum magneticum).